An 807-amino-acid polypeptide reads, in one-letter code: Glycerol-3-phosphate acyltransferase (807 aa).

The HXXXXD motif signature appears at 305 to 310 (CHRSHM).

This sequence belongs to the GPAT/DAPAT family.

The protein localises to the cell inner membrane. It catalyses the reaction sn-glycerol 3-phosphate + an acyl-CoA = a 1-acyl-sn-glycero-3-phosphate + CoA. It participates in phospholipid metabolism; CDP-diacylglycerol biosynthesis; CDP-diacylglycerol from sn-glycerol 3-phosphate: step 1/3. This chain is Glycerol-3-phosphate acyltransferase, found in Aliivibrio salmonicida (strain LFI1238) (Vibrio salmonicida (strain LFI1238)).